Consider the following 515-residue polypeptide: Maturase K (515 aa).

The protein belongs to the intron maturase 2 family. MatK subfamily.

It localises to the plastid. The protein localises to the chloroplast. In terms of biological role, usually encoded in the trnK tRNA gene intron. Probably assists in splicing its own and other chloroplast group II introns. The polypeptide is Maturase K (Picea mariana (Black spruce)).